The following is a 214-amino-acid chain: Charged multivesicular body protein 2b-A (214 aa).

A coiled-coil region spans residues glutamine 25–lysine 55. The tract at residues methionine 178–aspartate 214 is disordered. An MIT-interacting motif motif is present at residues glutamate 202–glycine 212.

It belongs to the SNF7 family. In terms of assembly, probable core component of the endosomal sorting required for transport complex III (ESCRT-III). ESCRT-III components are thought to multimerize to form a flat lattice on the perimeter membrane of the endosome.

It localises to the cytoplasm. Its subcellular location is the cytosol. The protein resides in the late endosome membrane. Its function is as follows. Probable core component of the endosomal sorting required for transport complex III (ESCRT-III) which is involved in multivesicular bodies (MVBs) formation and sorting of endosomal cargo proteins into MVBs. MVBs contain intraluminal vesicles (ILVs) that are generated by invagination and scission from the limiting membrane of the endosome and mostly are delivered to lysosomes enabling degradation of membrane proteins, such as stimulated growth factor receptors, lysosomal enzymes and lipids. The chain is Charged multivesicular body protein 2b-A (chmp2b-a) from Xenopus laevis (African clawed frog).